Reading from the N-terminus, the 956-residue chain is DNA ligase 4 (956 aa).

10 residues coordinate ATP: Glu307, Lys309, Ile310, Arg314, Glu371, Phe409, Glu476, Lys481, Lys498, and Lys500. Lys309 functions as the N6-AMP-lysine intermediate in the catalytic mechanism. A Mg(2+)-binding site is contributed by Glu371. Residue Glu476 participates in Mg(2+) binding. The interval 666–700 (LEDRKRRNAGPGRGAKRLKLANVSSDEDELGTDER) is disordered. 2 BRCT domains span residues 700-793 (RPTS…PRNL) and 857-956 (PKGM…DYPL).

Belongs to the ATP-dependent DNA ligase family. Mg(2+) is required as a cofactor.

The protein resides in the nucleus. It carries out the reaction ATP + (deoxyribonucleotide)n-3'-hydroxyl + 5'-phospho-(deoxyribonucleotide)m = (deoxyribonucleotide)n+m + AMP + diphosphate.. In terms of biological role, DNA ligase involved in DNA non-homologous end joining (NHEJ); required for double-strand break (DSB) repair. The protein is DNA ligase 4 (LIG4) of Yarrowia lipolytica (strain CLIB 122 / E 150) (Yeast).